Reading from the N-terminus, the 21-residue chain is thr operon leader peptide (21 aa).

The protein belongs to the thr operon leader peptide family.

This protein is involved in control of the biosynthesis of threonine. The chain is thr operon leader peptide from Salmonella choleraesuis (strain SC-B67).